The primary structure comprises 266 residues: Early E1A protein (266 aa).

Positions 39 to 47 (PSLYELYDL) are interaction with RB1 in competition with E2F1. The interval 75 to 145 (EGLFLPEPPV…AAAAADRERE (71 aa)) is interaction with UBE2I. Positions 98–102 (PQLHP) match the PXLXP motif, interaction with host ZMYND11 motif. Positions 107–111 (LLCYE) match the LXCXE motif, interaction with host RB1 and TMEM173/STING motif. A zinc finger spans residues 159–179 (CKSCEHHRNSTGNTDLMCSLC). Residues 195–226 (NEPEPNSTLDGDERPSPPKLGSAVPEGVIKPV) form a disordered region. Residues 255–259 (PVDLS) carry the PXDLS motif, CTBP-binding motif. The short motif at 261–265 (KRPRC) is the Nuclear localization signal element.

This sequence belongs to the adenoviridae E1A protein family. Interacts with host UBE2I; this interaction interferes with polySUMOylation. Interacts with host RB1; this interaction induces the aberrant dissociation of RB1-E2F1 complex thereby disrupting the activity of RB1 and activating E2F1-regulated genes. Interacts with host ATF7; the interaction enhances ATF7-mediated viral transactivation activity which requires the zinc binding domains of both proteins. Isoform early E1A 32 kDa protein and isoform early E1A 26 kDa protein interact (via N-terminus) with CUL1 and E3 ubiquitin ligase RBX1; these interactions inhibit RBX1-CUL1-dependent elongation reaction of ubiquitin chains and attenuate ubiquitination of SCF(FBXW7) target proteins. Interacts (via PXLXP motif) with host ZMYND11/BS69 (via MYND-type zinc finger); this interaction inhibits E1A mediated transactivation. Interacts with host EP300; this interaction stimulates the acetylation of RB1 by recruiting EP300 and RB1 into a multimeric-protein complex. Interacts with host CTBP1 and CTBP2; this interaction seems to potentiate viral replication. Interacts with host DCAF7. Interacts with host DYRK1A. Interacts with host KPNA4; this interaction allows E1A import into the host nucleus. Interacts with host EP400; this interaction stabilizes MYC. Interacts with host TBP protein; this interaction probably disrupts the TBP-TATA complex. Interacts (via LXCXE motif) with host TMEM173/STING; this interaction impairs the ability of TMEM173/STING to sense cytosolic DNA and promote the production of type I interferon (IFN-alpha and IFN-beta). Interacts (via C-terminus) with host ZBED1/hDREF (via C-terminus); the interaction is direct.

It localises to the host nucleus. Its function is as follows. Plays a role in viral genome replication by driving entry of quiescent cells into the cell cycle. Stimulation of progression from G1 to S phase allows the virus to efficiently use the cellular DNA replicating machinery to achieve viral genome replication. E1A protein has both transforming and trans-activating activities. Induces the disassembly of the E2F1 transcription factor from RB1 by direct competition for the same binding site on RB1, with subsequent transcriptional activation of E2F1-regulated S-phase genes and of the E2 region of the adenoviral genome. Release of E2F1 leads to the ARF-mediated inhibition of MDM2 and causes TP53/p53 to accumulate because it is not targeted for degradation by MDM2-mediated ubiquitination anymore. This increase in TP53, in turn, would arrest the cell proliferation and direct its death but this effect is counteracted by the viral protein E1B-55K. Inactivation of the ability of RB1 to arrest the cell cycle is critical for cellular transformation, uncontrolled cellular growth and proliferation induced by viral infection. Interaction with RBX1 and CUL1 inhibits ubiquitination of the proteins targeted by SCF(FBXW7) ubiquitin ligase complex, and may be linked to unregulated host cell proliferation. The tumorigenesis-restraining activity of E1A may be related to the disruption of the host CtBP-CtIP complex through the CtBP binding motif. Interaction with host TMEM173/STING impairs the ability of TMEM173/STING to sense cytosolic DNA and promote the production of type I interferon (IFN-alpha and IFN-beta). Promotes the sumoylation of host ZBED1/hDREF with SUMO1. In Homo sapiens (Human), this protein is Early E1A protein.